A 141-amino-acid polypeptide reads, in one-letter code: HTH-type transcriptional repressor NsrR (141 aa).

Residues 2-129 (QLTNFTDFGL…DQHTIQDMLT (128 aa)) form the HTH rrf2-type domain. Positions 28-51 (ITVVTETFDVSRNHMVKIINKLGQ) form a DNA-binding region, H-T-H motif. [2Fe-2S] cluster-binding residues include cysteine 91, cysteine 96, and cysteine 102.

[2Fe-2S] cluster serves as cofactor.

In terms of biological role, nitric oxide-sensitive repressor of genes involved in protecting the cell against nitrosative stress. May require iron for activity. This Aliivibrio salmonicida (strain LFI1238) (Vibrio salmonicida (strain LFI1238)) protein is HTH-type transcriptional repressor NsrR.